We begin with the raw amino-acid sequence, 109 residues long: Cytochrome c (109 aa).

The heme c site is built by Cys-25, Cys-28, His-29, and Met-88.

Belongs to the cytochrome c family. Binds 1 heme c group covalently per subunit.

It localises to the mitochondrion intermembrane space. Electron carrier protein. The oxidized form of the cytochrome c heme group can accept an electron from the heme group of the cytochrome c1 subunit of cytochrome reductase. Cytochrome c then transfers this electron to the cytochrome oxidase complex, the final protein carrier in the mitochondrial electron-transport chain. The chain is Cytochrome c from Tetrahymena pyriformis.